The following is a 125-amino-acid chain: Small ribosomal subunit protein uS12m (125 aa).

The interval 1–50 is disordered; the sequence is MPSLNQLIRHGREEKRRTDRTRALDQCPQKQGVCPRVSTRTPKKPNSAPR. A compositionally biased stretch (basic and acidic residues) spans 10–23; the sequence is HGREEKRRTDRTRA.

The protein belongs to the universal ribosomal protein uS12 family.

The protein localises to the mitochondrion. Protein S12 is involved in the translation initiation step. The chain is Small ribosomal subunit protein uS12m (RPS12) from Petunia hybrida (Petunia).